Reading from the N-terminus, the 185-residue chain is Calcium-binding protein CML37 (185 aa).

Residues 1-12 (MTLAKNQKSSLS) are compositionally biased toward polar residues. The disordered stretch occupies residues 1-45 (MTLAKNQKSSLSRLYKKVSSKRSESSRNLEDESRTSSNSSGSSSL). The span at 21 to 34 (KRSESSRNLEDESR) shows a compositional bias: basic and acidic residues. Residues 35–44 (TSSNSSGSSS) show a composition bias toward low complexity. EF-hand domains are found at residues 45-80 (LNVN…LGGA), 81-116 (LSSR…EDGS), 119-154 (ERRK…LGES), and 155-185 (CTVD…LMMR). Ca(2+) contacts are provided by aspartate 58, asparagine 60, aspartate 62, lysine 64, glutamate 69, aspartate 94, aspartate 96, aspartate 98, and glutamate 105. Ca(2+) contacts are provided by aspartate 168, asparagine 170, aspartate 172, and glutamate 179.

In terms of assembly, binds to ABCG36. In terms of tissue distribution, expressed in cotyledons, stipule, young leaves and at the hypocotyl-root junction. In mature root, expressed in the stele, cortex, emerging lateral root, root tip and root cap. In mature plant, expressed at the base of cauline and floral branches, and in rosette and cauline leaves. Expressed from stage 9 to 14 of flower development in anthers. At stage 15, expressed in carpel, sepals, petals and pollen until dehiscence. Expressed in developing seeds and young siliques.

Its function is as follows. Potential calcium sensor that binds calcium in vitro. The polypeptide is Calcium-binding protein CML37 (Arabidopsis thaliana (Mouse-ear cress)).